A 416-amino-acid chain; its full sequence is ORC1-type DNA replication protein 9 (416 aa).

ATP is bound by residues 79–83 (SGKSL), Y226, and R238.

The protein belongs to the CDC6/cdc18 family.

In terms of biological role, involved in regulation of DNA replication. The sequence is that of ORC1-type DNA replication protein 9 (cdc6i) from Haloarcula marismortui (strain ATCC 43049 / DSM 3752 / JCM 8966 / VKM B-1809) (Halobacterium marismortui).